Here is a 516-residue protein sequence, read N- to C-terminus: Importin subunit alpha-B (516 aa).

Over residues M1–A29 the composition is skewed to basic and acidic residues. Residues M1–T54 are disordered. In terms of domain architecture, IBB spans M1 to P55. ARM repeat units follow at residues P55–S96, S100–S140, P143–G182, H185–R227, K229–D268, N271–T310, D313–A352, K355–S394, and P398–V437. The disordered stretch occupies residues E490–L516. Low complexity predominate over residues S502 to L516.

It belongs to the importin alpha family. As to quaternary structure, forms a complex with tnpo/importin subunit beta.

The protein localises to the cytoplasm. Its subcellular location is the nucleus envelope. In terms of biological role, functions in nuclear protein import via a substrate-importin alpha-beta transport complex that passes though the nuclear pore complexes (NPC). Binds specifically and directly to substrates containing either a simple or bipartite NLS motif. The protein is Importin subunit alpha-B of Dictyostelium discoideum (Social amoeba).